Consider the following 681-residue polypeptide: DNA-directed RNA polymerase subunit beta' (681 aa).

The Zn(2+) site is built by Cys69, Cys71, Cys87, and Cys90. 3 residues coordinate Mg(2+): Asp489, Asp491, and Asp493.

It belongs to the RNA polymerase beta' chain family. RpoC1 subfamily. In terms of assembly, in plastids the minimal PEP RNA polymerase catalytic core is composed of four subunits: alpha, beta, beta', and beta''. When a (nuclear-encoded) sigma factor is associated with the core the holoenzyme is formed, which can initiate transcription. It depends on Mg(2+) as a cofactor. Zn(2+) is required as a cofactor.

The protein resides in the plastid. It localises to the chloroplast. The enzyme catalyses RNA(n) + a ribonucleoside 5'-triphosphate = RNA(n+1) + diphosphate. Functionally, DNA-dependent RNA polymerase catalyzes the transcription of DNA into RNA using the four ribonucleoside triphosphates as substrates. The sequence is that of DNA-directed RNA polymerase subunit beta' from Nicotiana tomentosiformis (Tobacco).